The following is a 293-amino-acid chain: MKRPDYRTLQALDAVIRERGFERAAQKLCITQSAVSQRIKQLENLFGQPLLVRTIPPHPTEQGQKLLALLHQVELLEEEWLGSDTPLLLSLAVNADSLATWLLPALKPVLSDLPIRLNLQVEDETRTQERLRRGEVVGAVSIQPQPLPSCLVDRLGALDYLFVASPSFAARYFPNGVTRSALLKAPAVAFDHLDDMHQSFLQQNFDLSPGSVPCHIVNSSEAFVQLARQGTTCCMIPHLQIERELEQRELIDLTPGLYQRRMLYWHRFAPESRMMRKVTDALLDHGHQVLRQD.

The HTH lysR-type domain maps to 4-60 (PDYRTLQALDAVIRERGFERAAQKLCITQSAVSQRIKQLENLFGQPLLVRTIPPHPT). A DNA-binding region (H-T-H motif) is located at residues 21-40 (FERAAQKLCITQSAVSQRIK).

It belongs to the LysR transcriptional regulatory family. In terms of assembly, homodimer.

Controls the transcription of genes involved in arginine and lysine metabolism. This is HTH-type transcriptional regulator ArgP from Sodalis glossinidius (strain morsitans).